A 135-amino-acid polypeptide reads, in one-letter code: MKNAEPSQRQLRVGEQVRHAVAHILQQGILLDNLLKNMVISVVEVRMSPDLKIAICFVSPLSTVHNASRADVVNALNKHSRFIRGEISHSLRQMKYMPELRFRLDNSFDNFSKIDALLRSPEVARDLHHNDKVGD.

It belongs to the RbfA family. In terms of assembly, monomer. Binds 30S ribosomal subunits, but not 50S ribosomal subunits or 70S ribosomes.

It is found in the cytoplasm. One of several proteins that assist in the late maturation steps of the functional core of the 30S ribosomal subunit. Associates with free 30S ribosomal subunits (but not with 30S subunits that are part of 70S ribosomes or polysomes). Required for efficient processing of 16S rRNA. May interact with the 5'-terminal helix region of 16S rRNA. The protein is Ribosome-binding factor A of Bartonella henselae (strain ATCC 49882 / DSM 28221 / CCUG 30454 / Houston 1) (Rochalimaea henselae).